We begin with the raw amino-acid sequence, 347 residues long: Olfactory receptor 13C3 (347 aa).

Topologically, residues 1–55 (MIVQLICTVCFLAVNTFHVRSSFDFLKADDMGEINQTLVSEFLLLGLSGYPKIEI) are extracellular. Residue N35 is glycosylated (N-linked (GlcNAc...) asparagine). The chain crosses the membrane as a helical span at residues 56 to 76 (VYFALILVMYLVILIGNGVLI). The Cytoplasmic portion of the chain corresponds to 77 to 84 (IASIFDSH). Residues 85 to 105 (FHTPMYFFLGNLSFLDICYTS) traverse the membrane as a helical segment. The Extracellular portion of the chain corresponds to 106 to 129 (SSVPSTLVSLISKKRNISFSGCAV). C127 and C219 are oxidised to a cystine. A helical membrane pass occupies residues 130–150 (QMFFGFAMGSTECLLLGMMAF). At 151-169 (DRYVAICNPLRYPIILSKV) the chain is on the cytoplasmic side. A helical transmembrane segment spans residues 170-190 (AYVLMASVSWLSGGINSAVQT). Residues 191-227 (LLAMRLPFCGNNIINHFACEILAVLKLACADISLNII) lie on the Extracellular side of the membrane. The chain crosses the membrane as a helical span at residues 228-247 (TMVISNMAFLVLPLMVIFFS). The Cytoplasmic portion of the chain corresponds to 248–267 (YMFILYTILQMNSATGRRKA). Residues 268–288 (FSTCSAHLTVVIIFYGTIFFM) traverse the membrane as a helical segment. Residues 289–307 (YAKPKSQDLIGEEKLQALD) lie on the Extracellular side of the membrane. A helical transmembrane segment spans residues 308–328 (KLISLFYGVVTPMLNPILYSL). Residues 329 to 347 (RNKDVKAAVKYLLNKKPIH) are Cytoplasmic-facing.

This sequence belongs to the G-protein coupled receptor 1 family.

The protein localises to the cell membrane. In terms of biological role, odorant receptor. This chain is Olfactory receptor 13C3 (OR13C3), found in Homo sapiens (Human).